Consider the following 341-residue polypeptide: Heterogeneous nuclear ribonucleoproteins A2/B1 (341 aa).

RRM domains are found at residues 9 to 92 (RKLF…ESGK) and 100 to 179 (KKLF…LSRQ). A Glycyl lysine isopeptide (Lys-Gly) (interchain with G-Cter in SUMO2) cross-link involves residue K10. Residue S17 is modified to Phosphoserine. The residue at position 26 (R26) is an Omega-N-methylarginine. S73 is modified (phosphoserine). K92 carries the N6,N6-dimethyllysine; alternate modification. Residue K92 forms a Glycyl lysine isopeptide (Lys-Gly) (interchain with G-Cter in SUMO2); alternate linkage. Residues K100, K108, and K125 each participate in a glycyl lysine isopeptide (Lys-Gly) (interchain with G-Cter in SUMO2) cross-link. The residue at position 128 (T128) is a Phosphothreonine. Residue S137 is modified to Phosphoserine. K140 participates in a covalent cross-link: Glycyl lysine isopeptide (Lys-Gly) (interchain with G-Cter in SUMO2). A Phosphothreonine modification is found at T147. Glycyl lysine isopeptide (Lys-Gly) (interchain with G-Cter in SUMO2); alternate cross-links involve residues K156 and K161. 2 positions are modified to N6-acetyllysine; alternate: K156 and K161. Phosphothreonine is present on T164. A Glycyl lysine isopeptide (Lys-Gly) (interchain with G-Cter in SUMO2) cross-link involves residue K174. S177 and S189 each carry phosphoserine. Residues 181 to 341 (MQEVQSSRSG…SGGYGGRSRY (161 aa)) are disordered. The span at 190–211 (GRGGNFGFGDSRGGGGNFGPGP) shows a compositional bias: gly residues. The residue at position 191 (R191) is an Asymmetric dimethylarginine; alternate. R191 carries the post-translational modification Dimethylated arginine; alternate. R191 bears the Omega-N-methylarginine; alternate mark. S200 is modified (phosphoserine). At R201 the chain carries Asymmetric dimethylarginine; alternate. R201 is modified (dimethylated arginine; alternate). R201 carries the post-translational modification Omega-N-methylarginine; alternate. S213 bears the Phosphoserine mark. R216 carries the omega-N-methylarginine modification. A phosphoserine mark is found at S219 and S224. Position 226 is an omega-N-methylarginine (R226). A Phosphoserine modification is found at S247. Position 254 is an asymmetric dimethylarginine; alternate (R254). The residue at position 254 (R254) is an Omega-N-methylarginine; alternate. The segment at 296–335 (QQPSNYGPMKSGNFGGSRNMGGPYGGGNYGPGGSGGSGGY) is nuclear targeting sequence. Over residues 308-341 (NFGGSRNMGGPYGGGNYGPGGSGGSGGYGGRSRY) the composition is skewed to gly residues. Residue S312 is modified to Phosphoserine. Position 313 is an omega-N-methylarginine (R313). Phosphotyrosine is present on Y319. Residues S329 and S332 each carry the phosphoserine modification. Position 335 is a phosphotyrosine (Y335). The residue at position 338 (R338) is an Omega-N-methylarginine.

In terms of assembly, identified in the spliceosome C complex. Identified in a IGF2BP1-dependent mRNP granule complex containing untranslated mRNAs. Interacts with IGF2BP1. Interacts with C9orf72. Interacts with DGCR8. Interacts with TARDBP. Interacts with CKAP5. Interacts with PPIA/CYPA. Interacts (via C-terminus) with FAM76B; the interaction results in retention of HNRNPA2B1 in the nucleus and inhibition of the NF-kappa-B-mediated inflammatory pathway. Interacts with NF-kappa-B inhibitors NFKBIA and NFKBIE; the interaction may be mediated by the RRM2 domain of HNRNPA2B1, and HNRNPA2B1 may interact simultaneously with FAM76B and either NFKBIA or NFKBIE to form a complex. In terms of processing, sumoylated in exosomes, promoting miRNAs-binding. Post-translationally, asymmetric dimethylation at Arg-254 constitutes the major methylation site. According to a report, methylation affects subcellular location and promotes nuclear localization. According to another report, methylation at Arg-254 does not influence nucleocytoplasmic shuttling.

It localises to the nucleus. It is found in the nucleoplasm. Its subcellular location is the cytoplasmic granule. The protein resides in the secreted. The protein localises to the extracellular exosome. Its function is as follows. Heterogeneous nuclear ribonucleoprotein (hnRNP) that associates with nascent pre-mRNAs, packaging them into hnRNP particles. The hnRNP particle arrangement on nascent hnRNA is non-random and sequence-dependent and serves to condense and stabilize the transcripts and minimize tangling and knotting. Packaging plays a role in various processes such as transcription, pre-mRNA processing, RNA nuclear export, subcellular location, mRNA translation and stability of mature mRNAs. Forms hnRNP particles with at least 20 other different hnRNP and heterogeneous nuclear RNA in the nucleus. Involved in transport of specific mRNAs to the cytoplasm in oligodendrocytes and neurons: acts by specifically recognizing and binding the A2RE (21 nucleotide hnRNP A2 response element) or the A2RE11 (derivative 11 nucleotide oligonucleotide) sequence motifs present on some mRNAs, and promotes their transport to the cytoplasm. Specifically binds single-stranded telomeric DNA sequences, protecting telomeric DNA repeat against endonuclease digestion. Also binds other RNA molecules, such as primary miRNA (pri-miRNAs): acts as a nuclear 'reader' of the N6-methyladenosine (m6A) mark by specifically recognizing and binding a subset of nuclear m6A-containing pri-miRNAs. Binding to m6A-containing pri-miRNAs promotes pri-miRNA processing by enhancing binding of DGCR8 to pri-miRNA transcripts. Involved in miRNA sorting into exosomes following sumoylation, possibly by binding (m6A)-containing pre-miRNAs. Acts as a regulator of efficiency of mRNA splicing, possibly by binding to m6A-containing pre-mRNAs. Plays a role in the splicing of pyruvate kinase PKM by binding repressively to sequences flanking PKM exon 9, inhibiting exon 9 inclusion and resulting in exon 10 inclusion and production of the PKM M2 isoform. This chain is Heterogeneous nuclear ribonucleoproteins A2/B1 (HNRNPA2B1), found in Saguinus oedipus (Cotton-top tamarin).